The primary structure comprises 182 residues: MVASTTVPYLPKIFFNLTGSRQLHGIFLIINFGLPFSMESSPSASSSSSLFWPVIFSDDSGVLFSTTSDVFFERSLLLAMSTLKICPLNLVFLALARASFVSSSTAKLTNPKPLDLLFVSLTTTACLIGAKLEKKSASCSSVTSWGIDLTNKVFISRPSSFCFETLLEGTSTFSIVSSISLW.

Helical transmembrane passes span 76-96 (LLLA…LALA) and 114-130 (LDLL…LIGA).

The protein resides in the membrane. This is an uncharacterized protein from Saccharomyces cerevisiae (strain ATCC 204508 / S288c) (Baker's yeast).